The following is a 220-amino-acid chain: NADH-quinone oxidoreductase subunit I (220 aa).

4Fe-4S ferredoxin-type domains lie at 71 to 102 and 112 to 141; these read LQRL…IITH and DSYT…MGNR. Positions 82, 85, 88, 92, 121, 124, 127, and 131 each coordinate [4Fe-4S] cluster. Residues 187–220 are disordered; that stretch reads MQATPLDYVQEPSKEESKEETPTRSESHKGDENV. Residues 198–220 show a composition bias toward basic and acidic residues; sequence PSKEESKEETPTRSESHKGDENV.

The protein belongs to the complex I 23 kDa subunit family. In terms of assembly, NDH-1 is composed of 14 different subunits. Subunits NuoA, H, J, K, L, M, N constitute the membrane sector of the complex. It depends on [4Fe-4S] cluster as a cofactor.

It localises to the cell inner membrane. It carries out the reaction a quinone + NADH + 5 H(+)(in) = a quinol + NAD(+) + 4 H(+)(out). Its function is as follows. NDH-1 shuttles electrons from NADH, via FMN and iron-sulfur (Fe-S) centers, to quinones in the respiratory chain. The immediate electron acceptor for the enzyme in this species is believed to be ubiquinone. Couples the redox reaction to proton translocation (for every two electrons transferred, four hydrogen ions are translocated across the cytoplasmic membrane), and thus conserves the redox energy in a proton gradient. The protein is NADH-quinone oxidoreductase subunit I of Helicobacter pylori (strain G27).